The primary structure comprises 302 residues: Urease accessory protein UreD (302 aa).

It belongs to the UreD family. As to quaternary structure, ureD, UreF and UreG form a complex that acts as a GTP-hydrolysis-dependent molecular chaperone, activating the urease apoprotein by helping to assemble the nickel containing metallocenter of UreC. The UreE protein probably delivers the nickel.

The protein localises to the cytoplasm. Its function is as follows. Required for maturation of urease via the functional incorporation of the urease nickel metallocenter. This chain is Urease accessory protein UreD, found in Pseudoalteromonas translucida (strain TAC 125).